Consider the following 486-residue polypeptide: UDP-N-acetylmuramate--L-alanine ligase (486 aa).

An ATP-binding site is contributed by 126-132 (GTHGKTS).

It belongs to the MurCDEF family.

The protein resides in the cytoplasm. It carries out the reaction UDP-N-acetyl-alpha-D-muramate + L-alanine + ATP = UDP-N-acetyl-alpha-D-muramoyl-L-alanine + ADP + phosphate + H(+). Its pathway is cell wall biogenesis; peptidoglycan biosynthesis. Its function is as follows. Cell wall formation. In Corynebacterium glutamicum (strain ATCC 13032 / DSM 20300 / JCM 1318 / BCRC 11384 / CCUG 27702 / LMG 3730 / NBRC 12168 / NCIMB 10025 / NRRL B-2784 / 534), this protein is UDP-N-acetylmuramate--L-alanine ligase.